We begin with the raw amino-acid sequence, 225 residues long: Cyanamide hydratase DDI2 (225 aa).

One can recognise an HD domain in the interval 52–162 (VLNHSLRVFQ…LQIATTLDNV (111 aa)).

It belongs to the cyanamide dehydrase family. In terms of assembly, homohexamer. It depends on Zn(2+) as a cofactor.

It carries out the reaction urea = cyanamide + H2O. Functionally, cyanamide hydratase involved in the detoxification and/or utilization of cyanamide, a toxic nitrile compound distributed widely in the environment. This is Cyanamide hydratase DDI2 from Saccharomyces cerevisiae (strain ATCC 204508 / S288c) (Baker's yeast).